The sequence spans 258 residues: DNA repair protein RecO (258 aa).

This sequence belongs to the RecO family.

In terms of biological role, involved in DNA repair and RecF pathway recombination. The chain is DNA repair protein RecO from Oceanobacillus iheyensis (strain DSM 14371 / CIP 107618 / JCM 11309 / KCTC 3954 / HTE831).